The primary structure comprises 534 residues: Sodium-dependent lysophosphatidylcholine symporter 1 (534 aa).

Topologically, residues 1-39 (MAKGEGAESGSAAGLLPTSILQASERPVQVKKEPKKKQQ) are cytoplasmic. A helical transmembrane segment spans residues 40–69 (LSICNKLCYAVGGAPYQLTGCALGFFLQIY). The Extracellular portion of the chain corresponds to 70–80 (LLDVAKVEPLP). The helical transmembrane segment at 81 to 101 (ASIILFVGRAWDAFTDPLVGF) threads the bilayer. At 102–113 (CISKSSWTRLGR) the chain is on the cytoplasmic side. The chain crosses the membrane as a helical span at residues 114–133 (LMPWIIFSTPLAIIAYFLIW). The Extracellular portion of the chain corresponds to 134–148 (FVPDFPSGTESSHGF). A helical membrane pass occupies residues 149-173 (LWYLLFYCLFETLVTCFHVPYSALT). The Cytoplasmic segment spans residues 174-180 (MFISTEQ). A helical membrane pass occupies residues 181 to 212 (SERDSATAYRMTVEVLGTVIGTAIQGQIVGQA). The Extracellular segment spans residues 213–232 (KAPCLQDQNGSVVVSEVANR). The cysteines at positions 216 and 464 are disulfide-linked. Residues asparagine 221 and asparagine 231 are each glycosylated (N-linked (GlcNAc...) asparagine). Residues 233-266 (TQSTASLKDTQNAYLLAAGIIASIYVLCAFILIL) traverse the membrane as a helical segment. The Cytoplasmic portion of the chain corresponds to 267 to 297 (GVREQRELYESQQAESMPFFQGLRLVMGHGP). A helical membrane pass occupies residues 298-324 (YVKLIAGFLFTSLAFMLVEGNFALFCT). The Extracellular segment spans residues 325 to 335 (YTLDFRNEFQN). A helical membrane pass occupies residues 336–354 (LLLAIMLSATFTIPIWQWF). Topologically, residues 355–358 (LTRF) are cytoplasmic. A helical membrane pass occupies residues 359–380 (GKKTAVYIGISSAVPFLILVAL). Residues 381–383 (MER) lie on the Extracellular side of the membrane. Residues 384-420 (NLIVTYVVAVAAGVSVAAAFLLPWSMLPDVIDDFHLK) traverse the membrane as a helical segment. Topologically, residues 421-430 (HPHSPGTEPI) are cytoplasmic. The chain crosses the membrane as a helical span at residues 431 to 457 (FFSFYVFFTKFASGVSLGVSTLSLDFA). Topologically, residues 458–469 (NYQRQGCSQPEQ) are extracellular. The chain crosses the membrane as a helical span at residues 470-493 (VKFTLKMLVTMAPIILILLGLLLF). Topologically, residues 494–534 (KLYPIDEEKRRQNKKALQALREEASSSGCSDTDSTELASIL) are cytoplasmic.

It belongs to the major facilitator superfamily. Post-translationally, N-glycosylated. As to expression, widely expressed. Exhibits an oscillatory pattern of expression in brown adipose tissue and liver consistent with a circadian rhythm. Enriched in brain micro-vessels, where it is specifically present in endothelium constituting the blood-brain barrier (at protein level).

The protein resides in the cell membrane. It is found in the endoplasmic reticulum membrane. It carries out the reaction a 1-acyl-sn-glycero-3-phosphocholine(in) + Na(+)(in) = a 1-acyl-sn-glycero-3-phosphocholine(out) + Na(+)(out). The catalysed reaction is 1-(4Z,7Z,10Z,13Z,16Z,19Z-docosahexaenoyl)-sn-glycero-3-phosphocholine(in) + Na(+)(in) = 1-(4Z,7Z,10Z,13Z,16Z,19Z-docosahexaenoyl)-sn-glycero-3-phosphocholine(out) + Na(+)(out). The enzyme catalyses 1-(9Z-octadecenoyl)-sn-glycero-3-phosphocholine(in) + Na(+)(in) = 1-(9Z-octadecenoyl)-sn-glycero-3-phosphocholine(out) + Na(+)(out). It catalyses the reaction 1-hexadecanoyl-sn-glycero-3-phosphocholine(in) + Na(+)(in) = 1-hexadecanoyl-sn-glycero-3-phosphocholine(out) + Na(+)(out). It carries out the reaction a 1-acyl-sn-glycero-3-phosphoethanolamine(in) + Na(+)(in) = a 1-acyl-sn-glycero-3-phosphoethanolamine(out) + Na(+)(out). Its function is as follows. Sodium-dependent lysophosphatidylcholine (LPC) symporter, which plays an essential role for blood-brain barrier formation and function. Specifically expressed in endothelium of the blood-brain barrier of micro-vessels and transports LPC into the brain. Transport of LPC is essential because it constitutes the major mechanism by which docosahexaenoic acid (DHA), an omega-3 fatty acid that is essential for normal brain growth and cognitive function, enters the brain. Transports LPC carrying long-chain fatty acids such LPC oleate and LPC palmitate with a minimum acyl chain length of 14 carbons. Does not transport docosahexaenoic acid in unesterified fatty acid. Not required for central nervous system vascular morphogenesis. This chain is Sodium-dependent lysophosphatidylcholine symporter 1, found in Mus musculus (Mouse).